We begin with the raw amino-acid sequence, 713 residues long: RNA-binding protein vts1 (713 aa).

Residues 154–188 (NSGLSLDKSLPSSPKGDSPSLSSSLPSLTTKSNLS) are compositionally biased toward low complexity. Disordered stretches follow at residues 154–208 (NSGL…SSKH), 254–336 (EPPA…RDRG), 356–389 (DESS…SRPL), 554–596 (EKIE…GNEL), and 667–713 (KAAK…SSMD). 2 stretches are compositionally biased toward polar residues: residues 189–208 (GNLN…SSKH) and 258–281 (SSAS…NANV). 2 stretches are compositionally biased toward low complexity: residues 282 to 297 (TSSL…SKTT) and 304 to 320 (SKKS…PNTS). Polar residues predominate over residues 321–330 (FFETPHNNIW). Residues 369 to 378 (SPPPPPPPPE) are compositionally biased toward pro residues. Polar residues predominate over residues 559-569 (PPNNSKNQTYR). Residues 570–583 (RSSRGSNKTRKSIS) are compositionally biased toward basic residues. The SAM domain maps to 595 to 656 (ELPQDIPSWL…LKSFQEVAPL (62 aa)). Polar residues predominate over residues 670-681 (KNQSSESLTSFK). The residue at position 673 (Ser-673) is a Phosphoserine. The segment covering 691–702 (SGSMSNEISSNS) has biased composition (low complexity). The span at 703 to 713 (TKQDVSSSSMD) shows a compositional bias: polar residues.

This sequence belongs to the VTS1 family. In terms of assembly, monomer. Binds to RNA.

Its subcellular location is the cytoplasm. It is found in the cytosol. The protein localises to the P-body. RNA-binding protein involved in post-transcriptional regulation through transcript degradation. The sequence is that of RNA-binding protein vts1 from Schizosaccharomyces pombe (strain 972 / ATCC 24843) (Fission yeast).